Reading from the N-terminus, the 498-residue chain is Peptidase inhibitor 16 (498 aa).

A signal peptide spans 1-29 (MHGSCSPWVMLPPPLLLLLLLIATGPTTA). Positions 39-167 (VDLHNQYRAQ…ANIHLLVCNY (129 aa)) constitute an SCP domain. An N-linked (GlcNAc...) asparagine glycan is attached at Asn-116. Disordered stretches follow at residues 204-277 (NPEK…GPSS), 317-407 (PKSM…SPLS), and 419-467 (ERGG…ENPE). Polar residues-rich tracts occupy residues 218 to 277 (VPST…GPSS) and 344 to 353 (LTESGESVPQ). The span at 367–380 (PEAILPEAEAAPTE) shows a compositional bias: low complexity. The segment covering 383–397 (VELREPEAESPKAES) has biased composition (basic and acidic residues). The span at 437–447 (SLPTFPSASGN) shows a compositional bias: polar residues. N-linked (GlcNAc...) asparagine glycosylation occurs at Asn-447.

It belongs to the CRISP family. In terms of assembly, interacts with PSP94/MSMB. N-glycosylated. As to expression, expressed strongly in aorta and skin, and weakly in adipose tissue (at protein level). In heart, found in the extracellular space surrounding cardiomyocytes (at protein level).

The protein localises to the secreted. In terms of biological role, may inhibit cardiomyocyte growth. In Mus musculus (Mouse), this protein is Peptidase inhibitor 16 (Pi16).